The following is an 809-amino-acid chain: DNA replication helicase (809 aa).

72-79 (GTAGAGKS) lines the ATP pocket.

It belongs to the herpesviridae helicase family. Associates with the primase and the primase-associated factor to form the helicase-primase complex.

The protein localises to the host nucleus. Component of the helicase/primase complex. Unwinds the DNA at the replication forks and generates single-stranded DNA for both leading and lagging strand synthesis. The primase synthesizes short RNA primers on the lagging strand that the polymerase elongates using dNTPs. Possesses helicase-like motifs and therefore may act as the helicase subunit of the complex. The polypeptide is DNA replication helicase (Epstein-Barr virus (strain B95-8) (HHV-4)).